The following is a 723-amino-acid chain: Aspartate--tRNA(Asp/Asn) ligase 1 (723 aa).

E206 is a binding site for L-aspartate. The segment at 230–233 (QLFK) is aspartate. Residue R252 participates in L-aspartate binding. ATP-binding positions include 252 to 254 (RDE) and Q261. H481 is an L-aspartate binding site. E516 provides a ligand contact to ATP. Position 523 (R523) interacts with L-aspartate. 568 to 571 (GMDR) is a binding site for ATP.

Belongs to the class-II aminoacyl-tRNA synthetase family. Type 1 subfamily. In terms of assembly, homodimer.

It is found in the cytoplasm. It carries out the reaction tRNA(Asx) + L-aspartate + ATP = L-aspartyl-tRNA(Asx) + AMP + diphosphate. In terms of biological role, aspartyl-tRNA synthetase with relaxed tRNA specificity since it is able to aspartylate not only its cognate tRNA(Asp) but also tRNA(Asn). Reaction proceeds in two steps: L-aspartate is first activated by ATP to form Asp-AMP and then transferred to the acceptor end of tRNA(Asp/Asn). The protein is Aspartate--tRNA(Asp/Asn) ligase 1 of Syntrophus aciditrophicus (strain SB).